The chain runs to 385 residues: Flap endonuclease 1 (385 aa).

Residues 1-104 (MGILGLSKLI…GELAKRAERR (104 aa)) form an N-domain region. Position 34 (D34) interacts with Mg(2+). DNA is bound by residues R47 and R70. Mg(2+) is bound by residues D86, E158, E160, D179, and D181. An I-domain region spans residues 122 to 253 (GIEKFNRRLV…KRAIELINTY (132 aa)). E158 contributes to the DNA binding site. DNA contacts are provided by G231 and D233. Position 233 (D233) interacts with Mg(2+). An interaction with PCNA region spans residues 336–344 (TQVRLDSFF). The interval 346 to 385 (TLPSTPNATNAAKRKADEAKKSANNKKAKTSGGGRGRRPK) is disordered. Basic residues predominate over residues 368-385 (ANNKKAKTSGGGRGRRPK).

This sequence belongs to the XPG/RAD2 endonuclease family. FEN1 subfamily. In terms of assembly, interacts with PCNA. Three molecules of FEN1 bind to one PCNA trimer with each molecule binding to one PCNA monomer. PCNA stimulates the nuclease activity without altering cleavage specificity. The cofactor is Mg(2+). Phosphorylated. Phosphorylation upon DNA damage induces relocalization to the nuclear plasma.

It localises to the nucleus. The protein resides in the nucleolus. It is found in the nucleoplasm. Its subcellular location is the mitochondrion. In terms of biological role, structure-specific nuclease with 5'-flap endonuclease and 5'-3' exonuclease activities involved in DNA replication and repair. During DNA replication, cleaves the 5'-overhanging flap structure that is generated by displacement synthesis when DNA polymerase encounters the 5'-end of a downstream Okazaki fragment. It enters the flap from the 5'-end and then tracks to cleave the flap base, leaving a nick for ligation. Also involved in the long patch base excision repair (LP-BER) pathway, by cleaving within the apurinic/apyrimidinic (AP) site-terminated flap. Acts as a genome stabilization factor that prevents flaps from equilibrating into structures that lead to duplications and deletions. Also possesses 5'-3' exonuclease activity on nicked or gapped double-stranded DNA, and exhibits RNase H activity. Also involved in replication and repair of rDNA and in repairing mitochondrial DNA. In Drosophila sechellia (Fruit fly), this protein is Flap endonuclease 1.